The primary structure comprises 979 residues: Translation initiation factor IF-2 (979 aa).

The span at Leu50–Gln77 shows a compositional bias: basic and acidic residues. Residues Leu50–Ser385 form a disordered region. Positions Ser78 to Val87 are enriched in polar residues. Composition is skewed to basic and acidic residues over residues Ile98–Gly109, Glu121–Ala142, and Glu149–Ala173. Over residues Glu174–Asp192 the composition is skewed to low complexity. Basic and acidic residues-rich tracts occupy residues Glu196–Thr211, Asn219–Ala263, and Pro280–Glu291. Residues Ala317–Ala327 are compositionally biased toward low complexity. The span at Gly351 to Arg368 shows a compositional bias: gly residues. Positions Pro479–Glu646 constitute a tr-type G domain. Residues Gly488–Thr495 form a G1 region. Position 488–495 (Gly488–Thr495) interacts with GTP. Residues Gly513 to His517 are G2. The interval Asp534–Gly537 is G3. GTP is bound by residues Asp534–His538 and Thr588–Asp591. A G4 region spans residues Thr588 to Asp591. Residues Ser624–Lys626 form a G5 region.

The protein belongs to the TRAFAC class translation factor GTPase superfamily. Classic translation factor GTPase family. IF-2 subfamily.

It is found in the cytoplasm. Its function is as follows. One of the essential components for the initiation of protein synthesis. Protects formylmethionyl-tRNA from spontaneous hydrolysis and promotes its binding to the 30S ribosomal subunits. Also involved in the hydrolysis of GTP during the formation of the 70S ribosomal complex. The sequence is that of Translation initiation factor IF-2 from Cupriavidus metallidurans (strain ATCC 43123 / DSM 2839 / NBRC 102507 / CH34) (Ralstonia metallidurans).